The primary structure comprises 115 residues: DNA-directed RNA polymerase subunit omega (115 aa).

The protein belongs to the RNA polymerase subunit omega family. As to quaternary structure, the RNAP catalytic core consists of 2 alpha, 1 beta, 1 beta' and 1 omega subunit. When a sigma factor is associated with the core the holoenzyme is formed, which can initiate transcription.

The catalysed reaction is RNA(n) + a ribonucleoside 5'-triphosphate = RNA(n+1) + diphosphate. Functionally, promotes RNA polymerase assembly. Latches the N- and C-terminal regions of the beta' subunit thereby facilitating its interaction with the beta and alpha subunits. The chain is DNA-directed RNA polymerase subunit omega from Cutibacterium acnes (strain DSM 16379 / KPA171202) (Propionibacterium acnes).